Reading from the N-terminus, the 564-residue chain is Proline--tRNA ligase (564 aa).

This sequence belongs to the class-II aminoacyl-tRNA synthetase family. ProS type 1 subfamily. As to quaternary structure, homodimer.

The protein resides in the cytoplasm. It carries out the reaction tRNA(Pro) + L-proline + ATP = L-prolyl-tRNA(Pro) + AMP + diphosphate. Functionally, catalyzes the attachment of proline to tRNA(Pro) in a two-step reaction: proline is first activated by ATP to form Pro-AMP and then transferred to the acceptor end of tRNA(Pro). As ProRS can inadvertently accommodate and process non-cognate amino acids such as alanine and cysteine, to avoid such errors it has two additional distinct editing activities against alanine. One activity is designated as 'pretransfer' editing and involves the tRNA(Pro)-independent hydrolysis of activated Ala-AMP. The other activity is designated 'posttransfer' editing and involves deacylation of mischarged Ala-tRNA(Pro). The misacylated Cys-tRNA(Pro) is not edited by ProRS. The chain is Proline--tRNA ligase from Thermosipho melanesiensis (strain DSM 12029 / CIP 104789 / BI429).